The sequence spans 411 residues: Stearoyl-[acyl-carrier-protein] 9-desaturase 2, chloroplastic (411 aa).

A chloroplast-targeting transit peptide spans Met1–Val44. Residues Glu148, Glu186, His189, Glu239, Glu272, and His275 each contribute to the Fe cation site.

The protein belongs to the fatty acid desaturase type 2 family. In terms of assembly, homodimer. It depends on Fe(2+) as a cofactor. As to expression, preferentially expressed in roots and flowers.

It localises to the plastid. The protein resides in the chloroplast. It catalyses the reaction octadecanoyl-[ACP] + 2 reduced [2Fe-2S]-[ferredoxin] + O2 + 2 H(+) = (9Z)-octadecenoyl-[ACP] + 2 oxidized [2Fe-2S]-[ferredoxin] + 2 H2O. It participates in lipid metabolism; fatty acid metabolism. Functionally, converts stearoyl-ACP to oleoyl-ACP by introduction of a cis double bond between carbons 9 and 10 of the acyl chain. Exhibits delta-9 palmitoyl-[acyl-carrier-protein] desaturase (PAD) activity. Involved in omega-7 monounsaturated fatty acid biosynthesis, especially in the endosperm oil. The chain is Stearoyl-[acyl-carrier-protein] 9-desaturase 2, chloroplastic (S-ACP-DES2) from Arabidopsis thaliana (Mouse-ear cress).